A 348-amino-acid chain; its full sequence is MFGPAKGRHFGVHPAPGFPGGVSQQAAGTKAGPAGAWPVGSRTDTMWRLRCKAKDGTHVLQGLSSRTRVRELQGQIAAITGIAPGGQRILVGYPPECLDLSNGDTILEDLPIQSGDMLIIEEDQTRPRSSPAFTKRGASSYVRETLPVLTRTVVPADNSCLFTSVYYVVEGGVLNPACAPEMRRLIAQIVASDPDFYSEAILGKTNQEYCDWIKRDDTWGGAIEISILSKFYQCEICVVDTQTVRIDRFGEDAGYTKRVLLIYDGIHYDPLQRNFPDPDTPPLTIFSSNDDIVLVQALELADEARRRRQFTDVNRFTLRCMVCQKGLTGQAEAREHAKETGHTNFGEV.

A compositionally biased stretch (basic residues) spans 1-11; sequence MFGPAKGRHFG. Positions 1–39 are disordered; sequence MFGPAKGRHFGVHPAPGFPGGVSQQAAGTKAGPAGAWPV. Residues 50–128 form a UBX-like region; it reads RCKAKDGTHV…IIEEDQTRPR (79 aa). The 126-residue stretch at 149 to 274 folds into the OTU domain; sequence LTRTVVPADN…GIHYDPLQRN (126 aa). The cys-loop stretch occupies residues 154–160; sequence VPADNSC. Residue aspartate 157 is part of the active site. Cysteine 160 acts as the Nucleophile in catalysis. The interval 213–223 is variable-loop; the sequence is IKRDDTWGGAI. The tract at residues 263-267 is his-loop; it reads YDGIH. Substrate is bound at residue isoleucine 266. Residue histidine 267 is part of the active site. The tract at residues 291 to 296 is S2 site; the sequence is DIVLVQ. The C2H2-type zinc finger occupies 318–342; that stretch reads LRCMVCQKGLTGQAEAREHAKETGH. Histidine 342 is an active-site residue.

Interacts with VCP; the interaction is direct. Interacts with FAF2/UBXD8. Interacts with DERL1; however interaction is dependent on the UBAX-like region, suggesting that it may be indirect. Interacts with PLAA, UBXN6 and VCP; may form a complex involved in macroautophagy.

It localises to the cytoplasm. It catalyses the reaction Thiol-dependent hydrolysis of ester, thioester, amide, peptide and isopeptide bonds formed by the C-terminal Gly of ubiquitin (a 76-residue protein attached to proteins as an intracellular targeting signal).. In terms of biological role, hydrolase that can remove conjugated ubiquitin from proteins and participates in endoplasmic reticulum-associated degradation (ERAD) for misfolded lumenal proteins. May act by triming the ubiquitin chain on the associated substrate to facilitate their threading through the VCP/p97 pore. Ubiquitin moieties on substrates may present a steric impediment to the threading process when the substrate is transferred to the VCP pore and threaded through VCP's axial channel. Mediates deubiquitination of 'Lys-27'-, 'Lys-29'- and 'Lys-33'-linked polyubiquitin chains. Also able to hydrolyze 'Lys-11'-linked ubiquitin chains. Cleaves both polyubiquitin and di-ubiquitin. May play a role in macroautophagy, regulating for instance the clearance of damaged lysosomes. May recruit PLAA, UBXN6 and VCP to damaged lysosome membranes decorated with K48-linked ubiquitin chains and remove these chains allowing autophagosome formation. This Homo sapiens (Human) protein is Ubiquitin thioesterase OTU1 (YOD1).